A 602-amino-acid polypeptide reads, in one-letter code: ATP-dependent DNA helicase II subunit 1 (602 aa).

The region spanning 268–483 is the Ku domain; it reads FQCPLILDEK…YDNMKKVTQS (216 aa). A phosphoserine mark is found at S370, S371, and S372.

Belongs to the ku70 family. As to quaternary structure, heterodimer of YKU70/HDF1 and YKU80/HDF2. Post-translationally, sumoylated by MMS21.

It is found in the nucleus. The protein localises to the chromosome. Its subcellular location is the telomere. The enzyme catalyses ATP + H2O = ADP + phosphate + H(+). Its function is as follows. Single-stranded DNA-dependent ATP-dependent helicase. Involved in non-homologous end joining (NHEJ) DNA double strand break repair. DNA-binding is sequence-independent but has a high affinity to nicks in double-stranded DNA and to the ends of duplex DNA. Binds to naturally occurring chromosomal ends, and therefore provides chromosomal end protection. Appears to have a role in recruitment of telomerase and CDC13 to the telomere and the subsequent telomere elongation. Required also for telomere recombination to repair telomeric ends in the absence of telomerase. KU70, of the KU70/KU80 heterodimer, binds to the stem loop of TLC1, the RNA component of telomerase. Involved in telomere maintenance. Interacts with telomeric repeats and subtelomeric sequences thereby controlling telomere length and protecting against subtelomeric rearrangement. Maintains telomeric chromatin, which is involved in silencing the expression of genes located at the telomere. Required for mating-type switching. This Saccharomyces cerevisiae (strain ATCC 204508 / S288c) (Baker's yeast) protein is ATP-dependent DNA helicase II subunit 1 (YKU70).